The sequence spans 251 residues: FHA domain-containing protein FHA1 (251 aa).

Positions 32-89 (IILGRNSKKSTVDVDLSSLGGGMNISRNHARIFYDFTRRRFSLEVLGKNGCFVEGVLH) constitute an FHA domain. Acidic residues predominate over residues 163 to 174 (EYDDEDDDEEED). A disordered region spans residues 163–209 (EYDDEDDDEEEDIRGSGKKTWRDGHEGVYASGEKKREGRSKADREAD). Residues 182-206 (TWRDGHEGVYASGEKKREGRSKADR) are compositionally biased toward basic and acidic residues.

Expressed in roots and vascular tissues near the shoot apex in young seedlings.

It localises to the nucleus. In terms of biological role, may play a role in the control of plant organ development. Does not show transactivation activity in yeast. The sequence is that of FHA domain-containing protein FHA1 from Arabidopsis thaliana (Mouse-ear cress).